Here is a 421-residue protein sequence, read N- to C-terminus: CinA-like protein (421 aa).

It belongs to the CinA family.

This Synechococcus sp. (strain ATCC 27144 / PCC 6301 / SAUG 1402/1) (Anacystis nidulans) protein is CinA-like protein.